A 295-amino-acid chain; its full sequence is Glycine N-acyltransferase-like protein Keg1 (295 aa).

N6-acetyllysine; alternate is present on Lys41. Lys41 is subject to N6-succinyllysine; alternate. Lys43 is subject to N6-acetyllysine. At Lys48 the chain carries N6-acetyllysine; alternate. At Lys48 the chain carries N6-succinyllysine; alternate. N6-acetyllysine occurs at positions 80 and 83. N6-acetyllysine; alternate occurs at positions 124, 128, and 140. N6-succinyllysine; alternate occurs at positions 124, 128, and 140. Lys150 bears the N6-acetyllysine mark. An N6-acetyllysine; alternate modification is found at Lys255. Lys255 bears the N6-succinyllysine; alternate mark.

The protein belongs to the glycine N-acyltransferase family. In terms of assembly, binds to microtubules. Specifically expressed in kidney and liver. Up-regulated in the regenerating liver as well as in hepatocellular carcinoma.

It localises to the cytoplasm. The protein localises to the cytoskeleton. The protein resides in the microtubule organizing center. It is found in the centrosome. The enzyme catalyses an acyl-CoA + glycine = an N-acylglycine + CoA + H(+). Functionally, acyltransferase which transfers the acyl group to the N-terminus of glycine. Can conjugate a multitude of substrates to form a variety of N-acylglycines. This chain is Glycine N-acyltransferase-like protein Keg1 (Keg1), found in Rattus norvegicus (Rat).